The following is a 271-amino-acid chain: RELT-like protein 1 (271 aa).

A signal peptide spans methionine 1–serine 23. At serine 24–glutamate 57 the chain is on the extracellular side. The disordered stretch occupies residues valine 27 to glycine 52. The span at proline 36 to glycine 52 shows a compositional bias: low complexity. The helical transmembrane segment at tyrosine 58–cysteine 78 threads the bilayer. Over histidine 79 to glutamate 271 the chain is Cytoplasmic. Residues serine 109 and serine 114 each carry the phosphoserine modification. Disordered stretches follow at residues cysteine 144–glycine 168 and threonine 231–glutamate 271. Pro residues predominate over residues proline 155 to leucine 165. Residues threonine 231–serine 244 are compositionally biased toward basic and acidic residues. Residues serine 244 and serine 247 each carry the phosphoserine modification.

Belongs to the RELT family. Interacts with RELT, RELL2, OXSR1 and PLSCR1.

It localises to the cell membrane. Its function is as follows. Induces activation of MAPK14/p38 cascade, when overexpressed. Induces apoptosis, when overexpressed. In Bos taurus (Bovine), this protein is RELT-like protein 1 (RELL1).